The chain runs to 461 residues: MASGPIAGGGVSKTKHKWSDSGNKSQKRSKPTVANSNSLGLEDNHQMMKISLSSISKLEVRNLKRKLQAELEEVRSLIKRLEPQGNNFAPVPNKKLKTANGGKKGGVHGAAADKGTVQILKSCNNLLTKLMKHKSGWIFNTPVDVVTLGLHDYHNIIKEPMDLGTVKTRLSKSLYKSPLEFAEDVRLTFNNAMLYNPVGHDVYHMAEILLNLFEEKWVPLETQYELLIRKQQPVRDIDFHAPVSTNTHNVEALPLPAPTPSLSPPPPPKVVENRTLERAESMTNPVKPAVLPVVPEKLVEEASANRDLTFDEKRQLSEDLQDLPYDKLEAVVQIIKKRTPELSQQDDEIELDIDSLDLETLWELFRFVTEYKESLSKKKEEQGLDSERDAESFHNSVHESNTLVTGLESSKVTELGHVASTVRQEVNVGGSSSSNSSSSGSGSGSSGSDSDSSGHESDTGN.

A compositionally biased stretch (gly residues) spans 1 to 11; that stretch reads MASGPIAGGGV. A disordered region spans residues 1–41; it reads MASGPIAGGGVSKTKHKWSDSGNKSQKRSKPTVANSNSLGL. Residues 1–51 constitute a chloroplast transit peptide; the sequence is MASGPIAGGGVSKTKHKWSDSGNKSQKRSKPTVANSNSLGLEDNHQMMKIS. A Bromo domain is found at 114 to 220; sequence KGTVQILKSC…NLFEEKWVPL (107 aa). Residues 298-379 form the NET domain; the sequence is LVEEASANRD…EYKESLSKKK (82 aa). The segment covering 376-392 has biased composition (basic and acidic residues); it reads SKKKEEQGLDSERDAES. Residues 376-461 form a disordered region; the sequence is SKKKEEQGLD…SSGHESDTGN (86 aa). Positions 393–412 are enriched in polar residues; sequence FHNSVHESNTLVTGLESSKV. Positions 429–451 are enriched in low complexity; the sequence is GGSSSSNSSSSGSGSGSSGSDSD. Over residues 452 to 461 the composition is skewed to basic and acidic residues; that stretch reads SSGHESDTGN.

In terms of assembly, interacts with SIZ1 (via PHD domain). Post-translationally, sumoylated by SIZ1. Sumoylation reduces capacity to bind to acetylated histone H3.

The protein resides in the plastid. It is found in the chloroplast. Probable transcription factor that binds to acetylated histone H3. The protein is Transcription factor GTE3, chloroplastic (GTE3) of Arabidopsis thaliana (Mouse-ear cress).